Here is a 481-residue protein sequence, read N- to C-terminus: Zinc finger CCCH domain-containing protein 4 (481 aa).

The C3H1-type zinc-finger motif lies at 157–184 (RNRAHVCSFFIRGECTRGAECPYRHEMP). In terms of domain architecture, RRM spans 228–301 (KTLYVGGLNS…QRLKLTWGRP (74 aa)). A disordered region spans residues 329–481 (HNQPPPMQQY…DVSTATGSSQ (153 aa)). The segment covering 331–345 (QPPPMQQYYMHPPPA) has biased composition (pro residues). Low complexity-rich tracts occupy residues 369-389 (AGGS…MPPH) and 399-410 (YMPSPYQQQYPP). Pro residues predominate over residues 423–444 (APPPAAYPYPQQPGPGSRPAPS). Positions 449 to 471 (SAISPDSAPAGSGAPSGSSQQAP) are enriched in low complexity. Polar residues predominate over residues 472 to 481 (DVSTATGSSQ).

The protein is Zinc finger CCCH domain-containing protein 4 of Arabidopsis thaliana (Mouse-ear cress).